We begin with the raw amino-acid sequence, 316 residues long: Leucine-rich repeat-containing protein 73 (316 aa).

LRR repeat units follow at residues serine 57–alanine 78, serine 86–asparagine 106, alanine 114–leucine 137, glycine 145–alanine 166, glutamine 174–aspartate 187, threonine 202–aspartate 223, and alanine 231–isoleucine 250. The disordered stretch occupies residues glycine 257–asparagine 296. A compositionally biased stretch (basic and acidic residues) spans glutamate 272–alanine 281.

This chain is Leucine-rich repeat-containing protein 73 (Lrrc73), found in Rattus norvegicus (Rat).